A 364-amino-acid chain; its full sequence is Dihydroorotate dehydrogenase (quinone) (364 aa).

FMN is bound by residues 61–65 (AGFDK) and Thr85. Position 65 (Lys65) interacts with substrate. 110–114 (NRMGF) contacts substrate. The FMN site is built by Asn139 and Asn170. Residue Asn170 participates in substrate binding. Ser173 functions as the Nucleophile in the catalytic mechanism. Asn175 contributes to the substrate binding site. FMN contacts are provided by Lys214 and Ala242. 243-244 (NT) is a binding site for substrate. FMN-binding positions include Gly266, Gly295, and 316-317 (YS).

This sequence belongs to the dihydroorotate dehydrogenase family. Type 2 subfamily. As to quaternary structure, monomer. FMN serves as cofactor.

The protein localises to the cell membrane. It carries out the reaction (S)-dihydroorotate + a quinone = orotate + a quinol. Its pathway is pyrimidine metabolism; UMP biosynthesis via de novo pathway; orotate from (S)-dihydroorotate (quinone route): step 1/1. Functionally, catalyzes the conversion of dihydroorotate to orotate with quinone as electron acceptor. This chain is Dihydroorotate dehydrogenase (quinone), found in Rhodopseudomonas palustris (strain HaA2).